A 419-amino-acid chain; its full sequence is UDP-N-acetylglucosamine 1-carboxyvinyltransferase (419 aa).

22-23 (KN) is a phosphoenolpyruvate binding site. Arg-91 contributes to the UDP-N-acetyl-alpha-D-glucosamine binding site. The active-site Proton donor is Cys-115. The residue at position 115 (Cys-115) is a 2-(S-cysteinyl)pyruvic acid O-phosphothioketal. UDP-N-acetyl-alpha-D-glucosamine is bound by residues 120–124 (RPVDL), 160–163 (KVSV), Asp-305, and Val-327.

This sequence belongs to the EPSP synthase family. MurA subfamily.

The protein localises to the cytoplasm. The enzyme catalyses phosphoenolpyruvate + UDP-N-acetyl-alpha-D-glucosamine = UDP-N-acetyl-3-O-(1-carboxyvinyl)-alpha-D-glucosamine + phosphate. Its pathway is cell wall biogenesis; peptidoglycan biosynthesis. Functionally, cell wall formation. Adds enolpyruvyl to UDP-N-acetylglucosamine. The chain is UDP-N-acetylglucosamine 1-carboxyvinyltransferase from Salmonella dublin (strain CT_02021853).